The following is a 136-amino-acid chain: Preprocaerulein type I' (136 aa).

The signal sequence occupies residues 1 to 26 (MFKGILLCVLFAVLSANPLSQPEGFA). Residues 27–136 (DEERDVRGLA…NALGGAPQQR (110 aa)) constitute a propeptide that is removed on maturation. The tract at residues 82–101 (GAPQQREANDERRFADDEDD) is disordered.

The protein belongs to the gastrin/cholecystokinin family. Expressed by the skin glands.

The protein resides in the secreted. Its function is as follows. The pharmacological activities of caerulein are quite similar to the physiological activities of gastrin and related peptides. The polypeptide is Preprocaerulein type I' (Xenopus laevis (African clawed frog)).